A 120-amino-acid polypeptide reads, in one-letter code: Small ribosomal subunit protein bS16 (120 aa).

Residues 84-110 are compositionally biased toward basic and acidic residues; the sequence is KREVKSNPEKAKPGKRAQERAAEKAQK. A disordered region spans residues 84–120; that stretch reads KREVKSNPEKAKPGKRAQERAAEKAQKAADAAAATAE. The span at 111–120 shows a compositional bias: low complexity; that stretch reads AADAAAATAE.

This sequence belongs to the bacterial ribosomal protein bS16 family.

This Rhizobium rhizogenes (strain K84 / ATCC BAA-868) (Agrobacterium radiobacter) protein is Small ribosomal subunit protein bS16.